We begin with the raw amino-acid sequence, 381 residues long: Probable envelope ADP,ATP carrier protein, chloroplastic (381 aa).

Residues 1–26 (MEEDRAILTFHRIPSLNSSLITTSSP) constitute a chloroplast transit peptide. The next 5 helical transmembrane spans lie at 78–98 (LAILALVPKDAAIFAAGALAG), 154–179 (LPQVIRVLPYSAVQLLAYESYKNLFK), 191–211 (LAAGACAGMTSTLLTYPLDVL), 237–257 (IASFYYGLGPSLVGIAPYIAV), and 281–301 (LLTAVLSAGIATLTCYPLDTV). Solcar repeat units follow at residues 85–177 (PKDA…YKNL), 185–268 (LSVI…VKKS), and 279–359 (SSLL…VKRL). Arg-159 contacts ADP. Residue Arg-302 coordinates ADP. A helical membrane pass occupies residues 334–360 (GFLPNALKTLPNSSIRLTTFDMVKRLI).

Belongs to the mitochondrial carrier (TC 2.A.29) family.

The protein localises to the plastid. The protein resides in the chloroplast membrane. In terms of biological role, transports adenine nucleotides. The protein is Probable envelope ADP,ATP carrier protein, chloroplastic (EAAC) of Arabidopsis thaliana (Mouse-ear cress).